The primary structure comprises 308 residues: Olfactory receptor 8D1 (308 aa).

Residues 1–25 lie on the Extracellular side of the membrane; that stretch reads MTMENYSMAAQFVLDGLTQQAELQL. Asn-5 is a glycosylation site (N-linked (GlcNAc...) asparagine). The helical transmembrane segment at 26 to 46 threads the bilayer; the sequence is PLFLLFLGIYVVTVVGNLGMI. Over 47–54 the chain is Cytoplasmic; that stretch reads LLIAVSPL. A helical transmembrane segment spans residues 55–75; the sequence is LHTPMYYFLSSLSFVDFCYSS. The Extracellular segment spans residues 76 to 99; the sequence is VITPKMLVNFLGKKNTILYSECMV. Cys-97 and Cys-189 are disulfide-bonded. A helical membrane pass occupies residues 100 to 120; the sequence is QLFFFVVFVVAEGYLLTAMAY. Residues 121-139 lie on the Cytoplasmic side of the membrane; sequence DRYVAICSPLLYNAIMSSW. A helical transmembrane segment spans residues 140 to 160; it reads VCSLLVLAAFFLGFLSALTHT. Residues 161 to 197 are Extracellular-facing; sequence SAMMKLSFCKSHIINHYFCDVLPLLNLSCSNTHLNEL. An N-linked (GlcNAc...) asparagine glycan is attached at Asn-186. A helical membrane pass occupies residues 198 to 217; the sequence is LLFIIAGFNTLVPTLAVAVS. At 218–237 the chain is on the cytoplasmic side; the sequence is YAFILYSILHIRSSEGRSKA. A helical transmembrane segment spans residues 238–258; sequence FGTCSSHLMAVVIFFGSITFM. Over 259 to 271 the chain is Extracellular; it reads YFKPPSSNSLDQE. The chain crosses the membrane as a helical span at residues 272 to 292; that stretch reads KVSSVFYTTVIPMLNPLIYSL. At 293–308 the chain is on the cytoplasmic side; that stretch reads RNKDVKKALRKVLVGK.

Belongs to the G-protein coupled receptor 1 family. In terms of tissue distribution, expressed in the tongue.

It is found in the cell membrane. Its function is as follows. Odorant receptor (Potential). May be involved in taste perception. In Homo sapiens (Human), this protein is Olfactory receptor 8D1 (OR8D1).